We begin with the raw amino-acid sequence, 210 residues long: FMN-dependent NADH:quinone oxidoreductase 9 (210 aa).

Residues Ser10 and Ser16 to Ser18 each bind FMN.

Belongs to the azoreductase type 1 family. As to quaternary structure, homodimer. FMN serves as cofactor.

It carries out the reaction 2 a quinone + NADH + H(+) = 2 a 1,4-benzosemiquinone + NAD(+). It catalyses the reaction N,N-dimethyl-1,4-phenylenediamine + anthranilate + 2 NAD(+) = 2-(4-dimethylaminophenyl)diazenylbenzoate + 2 NADH + 2 H(+). Functionally, quinone reductase that provides resistance to thiol-specific stress caused by electrophilic quinones. Also exhibits azoreductase activity. Catalyzes the reductive cleavage of the azo bond in aromatic azo compounds to the corresponding amines. In Burkholderia lata (strain ATCC 17760 / DSM 23089 / LMG 22485 / NCIMB 9086 / R18194 / 383), this protein is FMN-dependent NADH:quinone oxidoreductase 9.